The sequence spans 429 residues: N5-carboxyaminoimidazole ribonucleotide synthase (429 aa).

Residues K117, K157, 194-197 (EERV), E202, and 280-281 (NE) contribute to the ATP site. The ATP-grasp domain occupies 121–310 (RQRLAAAGVA…QFEQHLRAVL (190 aa)). Residues 406-429 (RASDDAVGVPPACGGRSDEEERRL) are disordered.

The protein belongs to the PurK/PurT family. As to quaternary structure, homodimer.

It carries out the reaction 5-amino-1-(5-phospho-beta-D-ribosyl)imidazole + hydrogencarbonate + ATP = 5-carboxyamino-1-(5-phospho-D-ribosyl)imidazole + ADP + phosphate + 2 H(+). The protein operates within purine metabolism; IMP biosynthesis via de novo pathway; 5-amino-1-(5-phospho-D-ribosyl)imidazole-4-carboxylate from 5-amino-1-(5-phospho-D-ribosyl)imidazole (N5-CAIR route): step 1/2. Functionally, catalyzes the ATP-dependent conversion of 5-aminoimidazole ribonucleotide (AIR) and HCO(3)(-) to N5-carboxyaminoimidazole ribonucleotide (N5-CAIR). The protein is N5-carboxyaminoimidazole ribonucleotide synthase of Mycobacterium bovis (strain ATCC BAA-935 / AF2122/97).